The sequence spans 274 residues: 2,3,4,5-tetrahydropyridine-2,6-dicarboxylate N-succinyltransferase (274 aa).

Substrate-binding residues include Arg104 and Asp141.

It belongs to the transferase hexapeptide repeat family. As to quaternary structure, homotrimer.

It is found in the cytoplasm. The enzyme catalyses (S)-2,3,4,5-tetrahydrodipicolinate + succinyl-CoA + H2O = (S)-2-succinylamino-6-oxoheptanedioate + CoA. Its pathway is amino-acid biosynthesis; L-lysine biosynthesis via DAP pathway; LL-2,6-diaminopimelate from (S)-tetrahydrodipicolinate (succinylase route): step 1/3. The polypeptide is 2,3,4,5-tetrahydropyridine-2,6-dicarboxylate N-succinyltransferase (Salmonella arizonae (strain ATCC BAA-731 / CDC346-86 / RSK2980)).